The following is a 1391-amino-acid chain: Leucine-rich PPR motif-containing protein, mitochondrial (1391 aa).

The transit peptide at 1–42 directs the protein to the mitochondrion; sequence MSALLAGARFLLRPGLRALPAPCVRLSPGQGRYLNNTPGHFA. PPR repeat units follow at residues 110-144, 145-179, 180-214, 215-249, 250-284, 389-425, 704-738, 741-775, 779-813, 815-850, 948-982, 1028-1062, 1063-1093, 1100-1134, and 1310-1344; these read LLRS…GAVF, DVSH…NVQP, NRVT…DLPI, TEAV…GIEP, GPET…EGSL, NLHS…GMPV, AIGT…DSSA, DTSK…DVPL, TTTS…GLAK, TSNL…NCMP, RDDM…NVIP, PESS…GTAM, SASA…AENH, NDAA…DKVP, and RETA…SVSP. The tract at residues 1118 to 1387 is RNA-binding; the sequence is KDALASLKAM…KLKKDKADSY (270 aa).

Its subcellular location is the mitochondrion. It is found in the nucleus. May play a role in RNA metabolism in both nuclei and mitochondria. May bind mature mRNA in the nucleus outer membrane. In mitochondria binds to poly(A) mRNA. May be involved in transcription regulation. Binds single-stranded DNA. This Xenopus tropicalis (Western clawed frog) protein is Leucine-rich PPR motif-containing protein, mitochondrial (lrpprc).